Here is a 647-residue protein sequence, read N- to C-terminus: Chaperone protein DnaK (647 aa).

At T200 the chain carries Phosphothreonine; by autocatalysis. The segment covering 611-631 (AGEQGAAGAAGAGAQQQAQPQ) has biased composition (low complexity). Residues 611–647 (AGEQGAAGAAGAGAQQQAQPQDDNVVDAEFKEVNDKK) form a disordered region. The segment covering 638–647 (AEFKEVNDKK) has biased composition (basic and acidic residues).

Belongs to the heat shock protein 70 family.

Functionally, acts as a chaperone. This is Chaperone protein DnaK from Cupriavidus taiwanensis (strain DSM 17343 / BCRC 17206 / CCUG 44338 / CIP 107171 / LMG 19424 / R1) (Ralstonia taiwanensis (strain LMG 19424)).